A 162-amino-acid polypeptide reads, in one-letter code: Nucleotide-binding protein ACIAD3137 (162 aa).

This sequence belongs to the YajQ family.

Nucleotide-binding protein. The sequence is that of Nucleotide-binding protein ACIAD3137 from Acinetobacter baylyi (strain ATCC 33305 / BD413 / ADP1).